A 346-amino-acid polypeptide reads, in one-letter code: Propane 2-monooxygenase, reductase component (346 aa).

The region spanning 5 to 94 (HKISFEPVDI…DCEIELLNFD (90 aa)) is the 2Fe-2S ferredoxin-type domain. [2Fe-2S] cluster-binding residues include Cys39, Cys44, Cys46, and Cys78. Positions 104 to 205 (IQDVTTKVAA…NGPYGSCTLR (102 aa)) constitute an FAD-binding FR-type domain.

It belongs to the bacterial ring-hydroxylating dioxygenase ferredoxin reductase family. As to quaternary structure, the propane 2-monooxygenase multicomponent enzyme system is composed of an electron transfer component and a monooxygenase component interacting with the effector protein PrmD. The electron transfer component is composed of a reductase (PrmB), and the monooxygenase component is formed by a large subunit (PrmA) and a small subunit (PrmC). Requires FAD as cofactor. It depends on [2Fe-2S] cluster as a cofactor.

In terms of biological role, reductase component of the propane 2-monooxygenase multicomponent enzyme system which is involved in the degradation of propane via the O2-dependent hydroxylation of propane. Reductase catalyzes the transfer of electrons from NADH or NADPH to monooxygenase. This chain is Propane 2-monooxygenase, reductase component, found in Gordonia sp. (strain TY-5).